The sequence spans 473 residues: Ribosomal RNA small subunit methyltransferase F (473 aa).

S-adenosyl-L-methionine contacts are provided by residues 124 to 130 (ASAPGSK), E148, D175, and D193. C246 acts as the Nucleophile in catalysis.

It belongs to the class I-like SAM-binding methyltransferase superfamily. RsmB/NOP family.

The protein resides in the cytoplasm. The catalysed reaction is cytidine(1407) in 16S rRNA + S-adenosyl-L-methionine = 5-methylcytidine(1407) in 16S rRNA + S-adenosyl-L-homocysteine + H(+). In terms of biological role, specifically methylates the cytosine at position 1407 (m5C1407) of 16S rRNA. The chain is Ribosomal RNA small subunit methyltransferase F from Aliivibrio salmonicida (strain LFI1238) (Vibrio salmonicida (strain LFI1238)).